The primary structure comprises 98 residues: Small ribosomal subunit protein bS6 (98 aa).

This sequence belongs to the bacterial ribosomal protein bS6 family.

In terms of biological role, binds together with bS18 to 16S ribosomal RNA. This is Small ribosomal subunit protein bS6 from Lactobacillus johnsonii (strain CNCM I-12250 / La1 / NCC 533).